The sequence spans 135 residues: UPF0251 protein Hore_18270 (135 aa).

This sequence belongs to the UPF0251 family.

The protein is UPF0251 protein Hore_18270 of Halothermothrix orenii (strain H 168 / OCM 544 / DSM 9562).